We begin with the raw amino-acid sequence, 218 residues long: Large ribosomal subunit protein uL3 (218 aa).

Belongs to the universal ribosomal protein uL3 family. As to quaternary structure, part of the 50S ribosomal subunit. Forms a cluster with proteins L14 and L19.

Functionally, one of the primary rRNA binding proteins, it binds directly near the 3'-end of the 23S rRNA, where it nucleates assembly of the 50S subunit. In Rhodococcus jostii (strain RHA1), this protein is Large ribosomal subunit protein uL3.